Reading from the N-terminus, the 425-residue chain is NAC domain-containing protein 10 (425 aa).

The span at 1–10 shows a compositional bias: polar residues; sequence MESPDSSSGS. The disordered stretch occupies residues 1–34; the sequence is MESPDSSSGSAPPRVLRRQQQQPGSAPELPPGFR. Positions 12 to 23 are enriched in low complexity; that stretch reads PPRVLRRQQQQP. An NAC domain is found at 29–200; it reads LPPGFRFHPT…DWVLCRIYKK (172 aa). The DNA-binding element occupies 129-206; it reads VGVKKALVFY…IYKKTNKAGA (78 aa).

In terms of tissue distribution, highest expression in stamens. Expressed in leaves.

It localises to the nucleus. Transcription factor of the NAC family associated with male fertility. Involved in anther development, but not in senescence. Reduced expression of NAC5 via RNAi leads to male-sterility. The protein is NAC domain-containing protein 10 of Oryza sativa subsp. japonica (Rice).